Reading from the N-terminus, the 527-residue chain is Probable pectinesterase/pectinesterase inhibitor 32 (527 aa).

The N-terminal stretch at 1 to 24 (MAKFRQMGSSIFFLFLIIISLCSA) is a signal peptide. Residues 25 to 165 (HKEAFSSTDL…GTTVRNLLTM (141 aa)) form a pectinesterase inhibitor 32 region. N-linked (GlcNAc...) asparagine glycans are attached at residues Asn-110, Asn-209, Asn-224, and Asn-280. The pectinesterase 32 stretch occupies residues 214-511 (DAVVAADGTG…FTVSQLIQGN (298 aa)). Thr-289 and Gln-319 together coordinate substrate. Asp-342 functions as the Proton donor; for pectinesterase activity in the catalytic mechanism. Cys-356 and Cys-376 are oxidised to a cystine. Asp-363 functions as the Nucleophile; for pectinesterase activity in the catalytic mechanism. The N-linked (GlcNAc...) asparagine glycan is linked to Asn-423. The substrate site is built by Arg-431 and Trp-433. 2 N-linked (GlcNAc...) asparagine glycosylation sites follow: Asn-494 and Asn-501.

The protein in the N-terminal section; belongs to the PMEI family. This sequence in the C-terminal section; belongs to the pectinesterase family. In terms of tissue distribution, expressed in siliques.

It is found in the secreted. The protein resides in the cell wall. It carries out the reaction [(1-&gt;4)-alpha-D-galacturonosyl methyl ester](n) + n H2O = [(1-&gt;4)-alpha-D-galacturonosyl](n) + n methanol + n H(+). The protein operates within glycan metabolism; pectin degradation; 2-dehydro-3-deoxy-D-gluconate from pectin: step 1/5. In terms of biological role, acts in the modification of cell walls via demethylesterification of cell wall pectin. This is Probable pectinesterase/pectinesterase inhibitor 32 (PME32) from Arabidopsis thaliana (Mouse-ear cress).